A 1907-amino-acid chain; its full sequence is Receptor-type tyrosine-protein phosphatase F (1907 aa).

The first 29 residues, 1 to 29 (MAPEPAPGRTMVPLVPALVMLGLVAGAHG), serve as a signal peptide directing secretion. At 30–1263 (DSKPVFIKVP…QQQEEPEMLW (1234 aa)) the chain is on the extracellular side. Ig-like C2-type domains are found at residues 33 to 123 (PVFI…AKLS), 135 to 224 (PSID…ANLY), and 232 to 314 (PRFS…AQVT). Cys54 and Cys107 are disulfide-bonded. Residue 68–77 (KKGKKVSSQR) participates in heparin binding. N-linked (GlcNAc...) asparagine glycosylation occurs at Asn117. A disulfide bridge connects residues Cys156 and Cys207. Residues Asn250 and Asn295 are each glycosylated (N-linked (GlcNAc...) asparagine). Cysteines 253 and 298 form a disulfide. Fibronectin type-III domains follow at residues 321 to 411 (PPID…TGEQ), 416 to 510 (PPRR…TQQG), 514 to 604 (QPAD…TAQS), 609 to 706 (PPQK…TDED), 711 to 819 (PPRK…TTGA), 820 to 914 (VPGR…PEDL), 918 to 1010 (FPQN…TMPV), and 1014 to 1098 (FAKN…TAPD). The segment at 398 to 417 (GPPSEAVRARTGEQAPSSPP) is disordered. The interval 693–712 (GPESSPVLVRTDEDVPSGPP) is disordered. A glycan (N-linked (GlcNAc...) asparagine) is linked at Asn721. Residue Asn966 is glycosylated (N-linked (GlcNAc...) asparagine). The helical transmembrane segment at 1264–1284 (VTGPVLAVILIILIVIAILLF) threads the bilayer. Over 1285–1907 (KRKRTHSPSS…YLGSFDHYAT (623 aa)) the chain is Cytoplasmic. Phosphoserine is present on Ser1305. Tyrosine-protein phosphatase domains are found at residues 1352 to 1607 (FSQE…LLEA) and 1639 to 1898 (MELE…ALEY). Substrate is bound by residues Asp1516, 1548 to 1554 (CSAGVGR), and Gln1592. The active-site Phosphocysteine intermediate is Cys1548. The active-site Phosphocysteine intermediate is the Cys1839.

Belongs to the protein-tyrosine phosphatase family. Receptor class 2A subfamily. Interacts with GRIP1. Interacts with PPFIA1, PPFIA2 and PPFIA3. Interacts with INSR.

It is found in the membrane. The enzyme catalyses O-phospho-L-tyrosyl-[protein] + H2O = L-tyrosyl-[protein] + phosphate. In terms of biological role, possible cell adhesion receptor. It possesses an intrinsic protein tyrosine phosphatase activity (PTPase) and dephosphorylates EPHA2 regulating its activity. The first PTPase domain has enzymatic activity, while the second one seems to affect the substrate specificity of the first one. The chain is Receptor-type tyrosine-protein phosphatase F (PTPRF) from Homo sapiens (Human).